Here is a 400-residue protein sequence, read N- to C-terminus: CinA-like protein (400 aa).

The protein belongs to the CinA family.

The polypeptide is CinA-like protein (Escherichia coli (strain SE11)).